The chain runs to 578 residues: Putative multidrug export ATP-binding/permease protein SA1683 (578 aa).

The Cytoplasmic portion of the chain corresponds to 1–15; it reads MIKRYLQFVKPYKYR. The helical transmembrane segment at 16 to 36 threads the bilayer; the sequence is IFATIIVGIIKFGIPMLIPLL. The ABC transmembrane type-1 domain occupies 16–306; sequence IFATIIVGII…LVASFTTLTQ (291 aa). Residues 37-59 lie on the Extracellular side of the membrane; sequence IKYAIDGVINNHALTTDEKVHHL. Residues 60–80 traverse the membrane as a helical segment; the sequence is TIAIGIALFIFVIVRPPIEFI. Residues 81-138 are Cytoplasmic-facing; it reads RQYLAQWTSNKILYDIRKKLYNHLQALSARFYANNQVGQVISRVINDVEQTKDFILTG. The helical transmembrane segment at 139–159 threads the bilayer; it reads LMNIWLDCITIIIALSIMFFL. At 160–162 the chain is on the extracellular side; that stretch reads DVK. Residues 163–183 form a helical membrane-spanning segment; it reads LTLAALFIFPFYILTVYVFFG. Topologically, residues 184–244 are cytoplasmic; the sequence is RLRKLTRERS…TRALKHTRWN (61 aa). A helical transmembrane segment spans residues 245–263; sequence AYSFAAINTVTDIGPIIVI. Residues 264 to 269 are Extracellular-facing; the sequence is GVGAYL. A helical membrane pass occupies residues 270–287; the sequence is AISGSITVGTLAAFVGYL. The Cytoplasmic segment spans residues 288-578; sequence ELLFGPLRRL…YEHLYSIQNL (291 aa). The region spanning 340–575 is the ABC transporter domain; it reads IDIDHVSFQY…QGAYEHLYSI (236 aa). ATP is bound at residue 374 to 381; the sequence is GMSGGGKS.

It belongs to the ABC transporter superfamily. Homodimer.

The protein localises to the cell membrane. In terms of biological role, may be involved in multidrug export. Transmembrane domains (TMD) form a pore in the cell membrane and the ATP-binding domain (NBD) is responsible for energy generation. This Staphylococcus aureus (strain N315) protein is Putative multidrug export ATP-binding/permease protein SA1683.